The primary structure comprises 222 residues: Ribosomal RNA small subunit methyltransferase G (222 aa).

S-adenosyl-L-methionine contacts are provided by residues Gly-73, Leu-78, 124-125 (AE), and Arg-137.

Belongs to the methyltransferase superfamily. RNA methyltransferase RsmG family.

The protein resides in the cytoplasm. Its function is as follows. Specifically methylates the N7 position of guanine in position 518 of 16S rRNA. This Acidothermus cellulolyticus (strain ATCC 43068 / DSM 8971 / 11B) protein is Ribosomal RNA small subunit methyltransferase G.